Here is a 300-residue protein sequence, read N- to C-terminus: Ribosomal RNA small subunit methyltransferase H (300 aa).

S-adenosyl-L-methionine is bound by residues 36–38 (GGH), D55, L89, D103, and Q110.

Belongs to the methyltransferase superfamily. RsmH family.

Its subcellular location is the cytoplasm. It carries out the reaction cytidine(1402) in 16S rRNA + S-adenosyl-L-methionine = N(4)-methylcytidine(1402) in 16S rRNA + S-adenosyl-L-homocysteine + H(+). Functionally, specifically methylates the N4 position of cytidine in position 1402 (C1402) of 16S rRNA. The sequence is that of Ribosomal RNA small subunit methyltransferase H from Thermotoga neapolitana (strain ATCC 49049 / DSM 4359 / NBRC 107923 / NS-E).